An 804-amino-acid chain; its full sequence is E3 ubiquitin-protein ligase RNF10 (804 aa).

3 stretches are compositionally biased toward low complexity: residues 1-31 (MPQS…SGSS), 78-90 (SNQS…QKSK), and 104-113 (SKPFSSSSNG). The tract at residues 1–134 (MPQSSPSAAA…AEFSPAQFSG (134 aa)) is disordered. S5 carries the post-translational modification Phosphoserine. S110 carries the post-translational modification Phosphoserine. Residues 114–124 (GRRDEVAEAQR) are compositionally biased toward basic and acidic residues. At S128 the chain carries Phosphoserine. The RING-type zinc-finger motif lies at 225–267 (CPICLYPPTAAKITRCGHIFCWACILHYLSLSEKTWSKCPICY). Disordered stretches follow at residues 589 to 611 (DIEK…ERRI), 646 to 665 (DSAL…LSPL), and 715 to 804 (KADG…VHTK). Residues 601-611 (AREERRRERRI) are compositionally biased toward basic and acidic residues. Polar residues predominate over residues 646–655 (DSALGPTSTE). Positions 715-729 (KADGWPKTAPKKDDN) are enriched in basic and acidic residues. Residues 795–804 (LFSTSVVHTK) show a composition bias toward polar residues.

Belongs to the RNF10 family. In terms of assembly, interacts with MEOX2.

It is found in the cytoplasm. The protein localises to the nucleus. It carries out the reaction S-ubiquitinyl-[E2 ubiquitin-conjugating enzyme]-L-cysteine + [acceptor protein]-L-lysine = [E2 ubiquitin-conjugating enzyme]-L-cysteine + N(6)-ubiquitinyl-[acceptor protein]-L-lysine.. The protein operates within protein modification; protein ubiquitination. In terms of biological role, E3 ubiquitin-protein ligase that catalyzes monoubiquitination of 40S ribosomal proteins RPS2/us5 and RPS3/us3 in response to ribosome stalling. Part of a ribosome quality control that takes place when ribosomes have stalled during translation initiation (iRQC): RNF10 acts by mediating monoubiquitination of RPS2/us5 and RPS3/us3, promoting their degradation by the proteasome. Also promotes ubiquitination of 40S ribosomal proteins in response to ribosome stalling during translation elongation. The action of RNF10 in iRQC is counteracted by USP10. May also act as a transcriptional factor involved in the regulation of MAG (Myelin-associated glycoprotein) expression. Acts as a regulator of Schwann cell differentiation and myelination. The polypeptide is E3 ubiquitin-protein ligase RNF10 (Mus musculus (Mouse)).